Consider the following 272-residue polypeptide: Putative pyruvate, phosphate dikinase regulatory protein (272 aa).

151 to 158 (GISRTSKT) lines the ADP pocket.

Belongs to the pyruvate, phosphate/water dikinase regulatory protein family. PDRP subfamily.

The enzyme catalyses N(tele)-phospho-L-histidyl/L-threonyl-[pyruvate, phosphate dikinase] + ADP = N(tele)-phospho-L-histidyl/O-phospho-L-threonyl-[pyruvate, phosphate dikinase] + AMP + H(+). The catalysed reaction is N(tele)-phospho-L-histidyl/O-phospho-L-threonyl-[pyruvate, phosphate dikinase] + phosphate + H(+) = N(tele)-phospho-L-histidyl/L-threonyl-[pyruvate, phosphate dikinase] + diphosphate. Bifunctional serine/threonine kinase and phosphorylase involved in the regulation of the pyruvate, phosphate dikinase (PPDK) by catalyzing its phosphorylation/dephosphorylation. In Staphylococcus aureus (strain Mu3 / ATCC 700698), this protein is Putative pyruvate, phosphate dikinase regulatory protein.